Here is a 142-residue protein sequence, read N- to C-terminus: Hemoglobin subunit alpha-1 (142 aa).

The Globin domain occupies 2–142 (VLSADDKSNV…VSTVLTSKYR (141 aa)). His59 is a binding site for O2. His88 is a heme b binding site.

Belongs to the globin family. As to quaternary structure, heterotetramer of two alpha chains and two beta chains. In terms of tissue distribution, red blood cells.

Functionally, involved in oxygen transport from the lung to the various peripheral tissues. Hemopressin acts as an antagonist peptide of the cannabinoid receptor CNR1. Hemopressin-binding efficiently blocks cannabinoid receptor CNR1 and subsequent signaling. The polypeptide is Hemoglobin subunit alpha-1 (HBA1) (Equus quagga burchellii (Burchell's zebra)).